The following is an 834-amino-acid chain: Translation factor GUF1 homolog, mitochondrial (834 aa).

The N-terminal 66 residues, 1–66 (MKLCGVRGSG…RPLLAEPRRY (66 aa)), are a transit peptide targeting the mitochondrion. The tr-type G domain maps to 129-314 (ACIRNVSVVA…QIIDKVPPPR (186 aa)). Residues 138–145 (AHVDHGKT), 205–209 (DTPGH), and 259–262 (TKMD) each bind GTP. A disordered region spans residues 475-507 (ATGPPETASRTKPATAAETASSDDASGSSGSSV). The span at 488-507 (ATAAETASSDDASGSSGSSV) shows a compositional bias: low complexity.

The protein belongs to the TRAFAC class translation factor GTPase superfamily. Classic translation factor GTPase family. LepA subfamily.

The protein localises to the mitochondrion inner membrane. The catalysed reaction is GTP + H2O = GDP + phosphate + H(+). Its function is as follows. Promotes mitochondrial protein synthesis. May act as a fidelity factor of the translation reaction, by catalyzing a one-codon backward translocation of tRNAs on improperly translocated ribosomes. Binds to mitochondrial ribosomes in a GTP-dependent manner. In Leishmania major, this protein is Translation factor GUF1 homolog, mitochondrial.